A 115-amino-acid chain; its full sequence is uncharacterized protein (115 aa).

This is an uncharacterized protein from Treponema pallidum (strain Nichols).